Reading from the N-terminus, the 78-residue chain is Serine--glyoxylate aminotransferase (78 aa).

It belongs to the class-V pyridoxal-phosphate-dependent aminotransferase family. As to quaternary structure, homodimer. Pyridoxal 5'-phosphate serves as cofactor. Expressed in leaves but not in root tissue or seedlings.

The protein resides in the peroxisome. The catalysed reaction is glyoxylate + L-serine = 3-hydroxypyruvate + glycine. It catalyses the reaction glyoxylate + L-alanine = glycine + pyruvate. Its activity is regulated as follows. Inhibited by aminooxyacetate. The sequence is that of Serine--glyoxylate aminotransferase from Triticum aestivum (Wheat).